The primary structure comprises 103 residues: Co-chaperonin GroES (103 aa).

This sequence belongs to the GroES chaperonin family. Heptamer of 7 subunits arranged in a ring. Interacts with the chaperonin GroEL.

It localises to the cytoplasm. Together with the chaperonin GroEL, plays an essential role in assisting protein folding. The GroEL-GroES system forms a nano-cage that allows encapsulation of the non-native substrate proteins and provides a physical environment optimized to promote and accelerate protein folding. GroES binds to the apical surface of the GroEL ring, thereby capping the opening of the GroEL channel. This chain is Co-chaperonin GroES, found in Prochlorococcus marinus (strain MIT 9312).